The following is a 1083-amino-acid chain: Protein HOS4 (1083 aa).

2 disordered regions span residues 1 to 233 and 267 to 328; these read MNET…RKLV and SSLF…YRDS. A phosphoserine mark is found at serine 14 and serine 16. Over residues 24 to 62 the composition is skewed to basic and acidic residues; the sequence is TRREELEKISKQETSEEEDTAGKHEQRETLSEEVSDKFP. Phosphothreonine is present on threonine 37. The residue at position 67 (serine 67) is a Phosphoserine. The span at 67–85 shows a compositional bias: polar residues; that stretch reads SFRSQTTSVHQATQNNLNA. The span at 86-118 shows a compositional bias: basic and acidic residues; that stretch reads KESEDLAHKNDASSHEGEVNGDSRPDDVPETNE. Polar residues predominate over residues 135 to 149; that stretch reads PNVRNVDIQNHQPFS. Over residues 151 to 166 the composition is skewed to basic and acidic residues; sequence DQLRAMLKEPKRKTVD. Positions 167–185 are enriched in acidic residues; sequence DFIEEEGLGAVEEEDLSDE. Residues 186-207 are compositionally biased toward basic and acidic residues; sequence VLEKNTTEPENVEKDIEYSDSD. Residues 277-293 show a composition bias toward polar residues; sequence VKETNNNLSNMNSSPAQ. The residue at position 290 (serine 290) is a Phosphoserine. Residues 300-310 are compositionally biased toward low complexity; that stretch reads VSRSNDSNKSS. Residues 314 to 323 are compositionally biased toward basic residues; sequence VSKRPKQKKG. ANK repeat units lie at residues 329–359, 363–392, and 398–427; these read GGRTRLQIACDKGKYDVVKKMIEEGGYDIND, AGNTALHEAALQGHIEIVELLIENGADVNI, and FGDTPLIDASANGHLDVVKYLLKNGADPTI. Residues 472–516 are disordered; the sequence is AGIHNDKSKNGNNAHTIDQPPFDNTTKAKNEKAADSPSMASNIDE. The span at 481 to 496 shows a compositional bias: polar residues; the sequence is NGNNAHTIDQPPFDNT. Position 507 is a phosphoserine (serine 507). 2 ANK repeats span residues 532–561 and 593–622; these read AGKEKLFKASKEGHLPYVGTYVENGGKIDL and NKTSALMVAVGRGHLGTVKLLLEAGADPTK. Disordered regions lie at residues 661 to 742 and 762 to 790; these read HSED…DDNE and DEEKLKSISPLSMEPHSPKKAKSVEISKI. Residues 665–675 are compositionally biased toward acidic residues; sequence NNDDDDDDDNN. The residue at position 698 (serine 698) is a Phosphoserine. Phosphothreonine is present on threonine 700. Residues 721–740 show a composition bias toward basic and acidic residues; the sequence is NNDRDVKESTTSDSRKRLDD. The residue at position 778 (serine 778) is a Phosphoserine.

In terms of assembly, identified in the Set3C complex with HOS2, HST1, SNT1, SIF2, CPR1 and SET3.

In terms of biological role, unknown. Component of the Set3C complex, which is required to repress early/middle sporulation genes during meiosis. This is Protein HOS4 (HOS4) from Saccharomyces cerevisiae (strain ATCC 204508 / S288c) (Baker's yeast).